The sequence spans 195 residues: Thymidine kinase (195 aa).

Residues 9–16 (ATMNAGKS) and 89–92 (DEAQ) each bind ATP. Residue Glu90 is the Proton acceptor of the active site. Cys147, Cys149, Cys184, and His187 together coordinate Zn(2+).

Belongs to the thymidine kinase family. As to quaternary structure, homotetramer.

Its subcellular location is the cytoplasm. The catalysed reaction is thymidine + ATP = dTMP + ADP + H(+). This is Thymidine kinase from Rhizobium meliloti (strain 1021) (Ensifer meliloti).